Reading from the N-terminus, the 842-residue chain is Cation/H(+) antiporter 20 (842 aa).

12 helical membrane-spanning segments follow: residues 26–46 (FPLLIVQTALIIAVSRFLAVL), 55–75 (VIAEIVGGILLGPSALGRNMA), 86–106 (MPILESVASIGLLFFLFLVGL), 122–142 (GIAVAGITLPFIAGVGVAFVI), 155–175 (YAEFLVFMGVALSITAFPVLA), 193–213 (MAAAAFNDVAAWILLALAVAL), 228–248 (LVSLWVLLSGAGFVVFMLVVI), 283–303 (FATDLIGIHSIFGAFVFGLTI), 320–340 (FVSGLLLPLYFATSGLKTDVA), 353–373 (LVVVTACAGKIVGTFVVAVMV), 380–400 (ALTLGFLMNTKGLVELIVLNI), and 413–433 (AILVLMALFTTFITTPTVMAI). The segment covering 585–595 (DHGHSHHHQDG) has biased composition (basic and acidic residues). The disordered stretch occupies residues 585–605 (DHGHSHHHQDGGGDGNVPENV).

This sequence belongs to the monovalent cation:proton antiporter 2 (CPA2) transporter (TC 2.A.37) family. CHX (TC 2.A.37.4) subfamily. As to expression, expressed in leaves and stems. Preferentially expressed in guards cells.

The protein localises to the endomembrane system. In terms of biological role, operates as a K(+)/H(+) antiporter that maintains K(+) homeostasis in guard cells and could regulate pH. Plays a critical role in osmoregulation through the control of stomates opening. This chain is Cation/H(+) antiporter 20 (CHX20), found in Arabidopsis thaliana (Mouse-ear cress).